We begin with the raw amino-acid sequence, 101 residues long: Small ribosomal subunit protein uS14 (101 aa).

It belongs to the universal ribosomal protein uS14 family. As to quaternary structure, part of the 30S ribosomal subunit. Contacts proteins S3 and S10.

Its function is as follows. Binds 16S rRNA, required for the assembly of 30S particles and may also be responsible for determining the conformation of the 16S rRNA at the A site. The protein is Small ribosomal subunit protein uS14 of Bartonella bacilliformis (strain ATCC 35685 / KC583 / Herrer 020/F12,63).